The primary structure comprises 143 residues: Large ribosomal subunit protein uL16 (143 aa).

Belongs to the universal ribosomal protein uL16 family. In terms of assembly, part of the 50S ribosomal subunit.

In terms of biological role, binds 23S rRNA and is also seen to make contacts with the A and possibly P site tRNAs. The sequence is that of Large ribosomal subunit protein uL16 from Sphingopyxis alaskensis (strain DSM 13593 / LMG 18877 / RB2256) (Sphingomonas alaskensis).